We begin with the raw amino-acid sequence, 240 residues long: Ribosomal RNA small subunit methyltransferase G (240 aa).

S-adenosyl-L-methionine contacts are provided by residues glycine 80, phenylalanine 85, 103-105 (DSS), 131-132 (AE), and arginine 150.

This sequence belongs to the methyltransferase superfamily. RNA methyltransferase RsmG family.

It is found in the cytoplasm. Specifically methylates the N7 position of a guanine in 16S rRNA. This chain is Ribosomal RNA small subunit methyltransferase G, found in Thermoanaerobacter pseudethanolicus (strain ATCC 33223 / 39E) (Clostridium thermohydrosulfuricum).